The following is a 238-amino-acid chain: Urease subunit alpha (238 aa).

Residues M1–A102 are urease gamma. A urease beta region spans residues N103–E238.

This sequence in the N-terminal section; belongs to the urease gamma subunit family. It in the C-terminal section; belongs to the urease beta subunit family. As to quaternary structure, heterohexamer of 3 UreA (alpha) and 3 UreB (beta) subunits.

The protein localises to the cytoplasm. It carries out the reaction urea + 2 H2O + H(+) = hydrogencarbonate + 2 NH4(+). It functions in the pathway nitrogen metabolism; urea degradation; CO(2) and NH(3) from urea (urease route): step 1/1. The polypeptide is Urease subunit alpha (Helicobacter pylori (strain P12)).